The chain runs to 173 residues: UPF0598 protein F59C6.12 (173 aa).

Belongs to the UPF0598 family.

This chain is UPF0598 protein F59C6.12, found in Caenorhabditis elegans.